A 522-amino-acid polypeptide reads, in one-letter code: TNF receptor-associated factor 6 (522 aa).

The interval 1–354 is interaction with TAX1BP1; the sequence is MSLLNCENSC…EAQQCNGIYI (354 aa). The RING-type; degenerate zinc finger occupies 70–109; sequence CPICLMALREAVQTPCGHRFCKACIIKSIRDAGHKCPVDN. Lys124 is covalently cross-linked (Glycyl lysine isopeptide (Lys-Gly) (interchain with G-Cter in SUMO); alternate). Lys124 is covalently cross-linked (Glycyl lysine isopeptide (Lys-Gly) (interchain with G-Cter in ubiquitin); alternate). Residue Lys142 forms a Glycyl lysine isopeptide (Lys-Gly) (interchain with G-Cter in SUMO) linkage. TRAF-type zinc fingers lie at residues 150–202 and 203–259; these read DHQA…EDKE and IHDQ…NHLA. The stretch at 288 to 348 forms a coiled coil; the sequence is YVSEVRNFQE…DKVAEIEAQQ (61 aa). A Glycyl lysine isopeptide (Lys-Gly) (interchain with G-Cter in ubiquitin) cross-link involves residue Lys319. An MATH domain is found at 350–499; that stretch reads NGIYIWKIGN…DDTLLVRCEV (150 aa). Residues 355-522 form an interaction with TANK region; sequence WKIGNFGMHL…FQPRSTDSGV (168 aa). Lys453 is covalently cross-linked (Glycyl lysine isopeptide (Lys-Gly) (interchain with G-Cter in SUMO)).

It belongs to the TNF receptor-associated factor family. A subfamily. As to quaternary structure, homotrimer. Homooligomer. N-terminal region is dimeric while C-terminal region is trimeric; maybe providing a mode of oligomerization. Upon IL1B treatment, forms a complex with PELI1, IRAK1, IRAK4 and MYD88; this complex recruits MAP3K7/TAK1, TAB1 and TAB2 to mediate NF-kappa-B activation. Direct binding of SMAD6 to PELI1 prevents the complex formation and hence negatively regulates IL1R-TLR signaling and eventually NF-kappa-B-mediated gene expression. Binds to TNFRSF5/CD40 and TNFRSF11A/RANK. Associates with NGFR, TNFRSF17, IRAK2, IRAK3, RIPK2, MAP3K1, MAP3K5, MAP3K14, CSK, TRAF, TRAF-interacting protein TRIP and TNF receptor associated protein TDP2. Interacts with IL17R. Interacts with SQSTM1 bridging NTRK1 and NGFR. Forms a ternary complex with SQSTM1 and PRKCZ. Interacts with PELI2 and PELI3. Binds UBE2V1. Interacts with TAX1BP1; this interaction mediates deubiquitination of TRAF6 and inhibition of NF-kappa-B activation. Interacts with ZNF675. Interacts with ARRB1 and ARRB2. Interacts with MAP3K7 and TAB1/MAP3K7IP1; during IL-1 signaling. Interacts with UBE2N. Interacts with TGFBR1, HDAC1 and RANGAP1. Interacts with AKT1, AKT2 and AKT3. Interacts (via TRAF domains) with NUMBL (via C-terminal). Interacts with RBCK1. Interacts with LIMD1 (via LIM domains). Interacts with RSAD2/viperin. Interacts (via C-terminus) with EIF2AK2/PKR (via the kinase catalytic domain). Interacts with ZFAND5. Interacts with IL1RL1. Interacts with TRAFD1. Interacts with AJUBA. Interacts with MAVS/IPS1. Interacts (via TRAF domains) with DYNC2I2 (via WD domains). Interacts with IFIT3 (via N-terminus). Interacts with TICAM2. Interacts with CARD14. Interacts with CD40 and MAP3K8; the interaction is required for ERK activation. Interacts with TICAM1 and this interaction is enhanced in the presence of WDFY1. Interacts with TANK; this interaction increases in response to DNA damage. Interacts with USP10; this interaction increases in response to DNA damage. Interacts with ZC3H12A; this interaction increases in response to DNA damage and is stimulated by TANK. Interacts with WDFY3. Interacts with TRIM13. Interacts with GPS2. Interacts (via C-terminus) with SASH1. Interacts with LRRC19. Interacts with IL17RA and TRAF3IP2. Interacts with TOMM70. Interacts with AMBRA1; interaction is required to mediate 'Lys-63'-linked ubiquitination of ULK1. Interacts with CRBN; this interaction inhibits TLR4-mediated signaling by preventing TRAF6-mediated ubiquitination of ECSIT. Post-translationally, sumoylated on Lys-124, Lys-142 and Lys-453 with SUMO1. In terms of processing, polyubiquitinated on Lys-124 by TRAF3IP2; after cell stimulation with IL17A. Polyubiquitinated on Lys-124; after cell stimulation with IL1B or TGFB. This ligand-induced cell stimulation leads to dimerization/oligomerization of TRAF6 molecules, followed by auto-ubiquitination which involves UBE2N and UBE2V1 and leads to TRAF6 activation. This 'Lys-63' site-specific poly-ubiquitination appears to be associated with the activation of signaling molecules. Deubiquitinated by USP10 in a TANK-dependent manner, leading to the negative regulation of NF-kappa-B signaling upon DNA damage. LRRC19 induces 'Lys-63' ubiquitination. Ubiquitinated at Lys-319 by the SCF(FBXL2) complex, leading to its degradation by the proteasome.

It is found in the cytoplasm. The protein localises to the cell cortex. The protein resides in the nucleus. Its subcellular location is the lipid droplet. It catalyses the reaction S-ubiquitinyl-[E2 ubiquitin-conjugating enzyme]-L-cysteine + [acceptor protein]-L-lysine = [E2 ubiquitin-conjugating enzyme]-L-cysteine + N(6)-ubiquitinyl-[acceptor protein]-L-lysine.. The protein operates within protein modification; protein ubiquitination. In terms of biological role, E3 ubiquitin ligase that, together with UBE2N and UBE2V1, mediates the synthesis of 'Lys-63'-linked-polyubiquitin chains conjugated to proteins, such as ECSIT, IKBKG, IRAK1, AKT1 and AKT2. Also mediates ubiquitination of free/unanchored polyubiquitin chain that leads to MAP3K7 activation. Leads to the activation of NF-kappa-B and JUN. Seems to also play a role in dendritic cells (DCs) maturation and/or activation. Represses c-Myb-mediated transactivation, in B-lymphocytes. Adapter protein that seems to play a role in signal transduction initiated via TNF receptor, IL-1 receptor and IL-17 receptor. Regulates osteoclast differentiation by mediating the activation of adapter protein complex 1 (AP-1) and NF-kappa-B, in response to RANK-L stimulation. Together with MAP3K8, mediates CD40 signals that activate ERK in B-cells and macrophages, and thus may play a role in the regulation of immunoglobulin production. Acts as a regulator of the JNK and NF-kappa-B signaling pathways by initiating assembly of heterotypic 'Lys-63'-/'Lys-48'-linked branched ubiquitin chains that are then recognized by TAB2: TRAF6 catalyzes initial 'Lys-63'-linked-polyubiquitin chains that are then branched via 'Lys-48'-linked polyubiquitin by HUWE1. 'Lys-63'-/'Lys-48'-linked branched ubiquitin chains protect 'Lys-63'-linkages from CYLD deubiquitination. Also participates in the TCR signaling by ubiquitinating LAT. The protein is TNF receptor-associated factor 6 (TRAF6) of Cercocebus atys (Sooty mangabey).